Consider the following 637-residue polypeptide: MGRIIGIDLGTTNSCVAVMEGGDPVVIANQEGNRTTPSIVAFTESGERLVGQVAKRQAVTNSENTVYAVKRLIGRKYNSKEVQYDKSISPFKISEAPNGDAQIEVRGRAYSPAEISSMVLVKMKQTAEDYLGEKITDAVITVPAYFNDSQRQATKDAGKIAGLNVLRIINEPTAAALAYGLDKKKDEKIAVFDLGGGTFDISILELGEGVFEVKSTNGDTHLGGEDFDQRIIDYLVSEFKKDQGIDIRSDKMALQRLKEAAEKAKMELSSSMETDINLPFITADASGPKHMNIKLTRARMEALVEELIDRLEGPCRTALKDAGLSPKDIDEVILVGGMTRMPRVQQKVKEIFDREPHKGVNPDEVVAVGAAIQGGVLGGEVKDVLLLDVTPLSLGIETLGGVMTKLIEKNTTIPTRKSQIFSTAADNQPAVSIHVLQGERSMAGDNRTLGRFDLVGIPPAPRGIPQIEVTFDIDANGIVHVSAKDLGTGKEQSIKITASSGLSETEIEKLVREAESHGEEDRKKKELVEARNSADAMAYGVEKNIKEFGDKVDAAEKARIEDAIAKVRKAVEGDDINAIRSAQDELTTASHKLAEAMYAKTSQAGAGPQPGAGPGTGGQGPGKKDEDVVDADFEEVK.

Phosphothreonine; by autocatalysis is present on threonine 198. The tract at residues 597 to 637 is disordered; the sequence is MYAKTSQAGAGPQPGAGPGTGGQGPGKKDEDVVDADFEEVK. The segment covering 608 to 621 has biased composition (gly residues); the sequence is PQPGAGPGTGGQGP. The segment covering 627 to 637 has biased composition (acidic residues); it reads DVVDADFEEVK.

This sequence belongs to the heat shock protein 70 family.

Functionally, acts as a chaperone. This Syntrophus aciditrophicus (strain SB) protein is Chaperone protein DnaK.